The chain runs to 150 residues: Dynein light chain Tctex-type protein 2B (150 aa).

It belongs to the dynein light chain Tctex-type family.

It localises to the dynein axonemal particle. Acts as one of several non-catalytic accessory components of the cytoplasmic dynein 2 complex (dynein-2 complex), a motor protein complex that drives the movement of cargos along microtubules within cilia and flagella in concert with the intraflagellar transport (IFT) system. Required for proper retrograde ciliary transport. The protein is Dynein light chain Tctex-type protein 2B (dynlt2b) of Danio rerio (Zebrafish).